The primary structure comprises 298 residues: Protease HtpX homolog (298 aa).

A run of 2 helical transmembrane segments spans residues 14–34 (ILVM…IGYL) and 39–59 (VIGG…VIIG). Residue His144 participates in Zn(2+) binding. Glu145 is a catalytic residue. Residue His148 participates in Zn(2+) binding. 2 helical membrane-spanning segments follow: residues 159–179 (IALA…NFWW) and 195–215 (IFAI…ATIA). Residue Glu224 participates in Zn(2+) binding.

Belongs to the peptidase M48B family. The cofactor is Zn(2+).

Its subcellular location is the cell membrane. The protein is Protease HtpX homolog of Limosilactobacillus reuteri (strain DSM 20016) (Lactobacillus reuteri).